Consider the following 723-residue polypeptide: Tripartite motif-containing protein 42 (723 aa).

The RING-type zinc-finger motif lies at 146 to 192 (CPMCSRLRLHSFMLPCNHSLCEKCLRQLQKHAEVTENFFILICPVCD). B box-type zinc fingers lie at residues 235–280 (PILC…FVDT) and 285–326 (QDEK…TISL). Zn(2+) contacts are provided by cysteine 290, histidine 293, cysteine 313, and histidine 318. The stretch at 382–407 (KLRSILQEKEKIIMEQIENLEVSRQK) forms a coiled coil. Residues 434-492 (LKETGQVAFLQSAKILVDQIEDGIQTTYRPDPQLRLHSINYVPLDFVELSSAIHELFPT) form the COS domain. One can recognise a Fibronectin type-III domain in the interval 603–701 (TPGPIVIYQT…DICKVVTPDG (99 aa)).

This sequence belongs to the TRIM/RBCC family.

The protein is Tripartite motif-containing protein 42 (TRIM42) of Homo sapiens (Human).